Reading from the N-terminus, the 649-residue chain is Choline transporter-like protein 3 (649 aa).

The chain crosses the membrane as a helical span at residues 33-53; that stretch reads AWLFLFFLFWTGLVFIMGYSV. Asn136 and Asn151 each carry an N-linked (GlcNAc...) asparagine glycan. The next 5 helical transmembrane spans lie at 213–233, 235–255, 284–304, 334–354, and 384–404; these read DTVL…MFTF, FITT…LLFV, LLGF…LIYV, LWTF…LLSL, and LIGL…AVAG. Residues Asn414, Asn502, and Asn520 are each glycosylated (N-linked (GlcNAc...) asparagine). 2 consecutive transmembrane segments (helical) span residues 533–553 and 562–582; these read FIIF…GLMA and VWAV…HSFL.

Belongs to the CTL (choline transporter-like) family.

The protein resides in the membrane. The polypeptide is Choline transporter-like protein 3 (SLC44A3) (Bos taurus (Bovine)).